The following is a 188-amino-acid chain: PRA1 family protein F3 (188 aa).

A run of 4 helical transmembrane segments spans residues isoleucine 74–phenylalanine 94, threonine 95–phenylalanine 115, threonine 123–phenylalanine 143, and isoleucine 145–threonine 165.

It belongs to the PRA1 family. As to quaternary structure, interacts with PRA1F2 and PRA1D. Interacts with ACD11 and BPA1. Expressed in lateral roots, lateral root caps and columella cells.

The protein resides in the endoplasmic reticulum membrane. The protein localises to the membrane. It localises to the cytoplasm. Functionally, may be involved in both secretory and endocytic intracellular trafficking in the endosomal/prevacuolar compartments. This chain is PRA1 family protein F3, found in Arabidopsis thaliana (Mouse-ear cress).